Here is a 237-residue protein sequence, read N- to C-terminus: MKVLAPLILAGAASAHTIFSSLEVGGVNQGIGQGVRVPSYNGPIEDVTSNSIACNGPPNPTTPTNKVITVRAGETVTAVWRYMLSTTGSAPNDIMDSSHKGPTMAYLKKVDNATTDSGVGGGWFKIQEDGLTNGVWGTERVINGQGRHNIKIPECIAPGQYLLRAEMLALHGASNYPGAQFYMECAQLNIVGGTGSKTPSTVSFPGAYKGTDPGVKINIYWPPVTSYQIPGPGVFTC.

Positions 1-15 (MKVLAPLILAGAASA) are cleaved as a signal peptide. Residues His16 and His99 each coordinate Cu(2+). Intrachain disulfides connect Cys54-Cys185 and Cys155-Cys237. N-linked (GlcNAc...) asparagine glycosylation is present at Asn112. Residues His171 and Gln180 each contribute to the O2 site. Tyr182 contacts Cu(2+).

Belongs to the polysaccharide monooxygenase AA9 family. It depends on Cu(2+) as a cofactor.

It localises to the secreted. It catalyses the reaction [(1-&gt;4)-beta-D-glucosyl]n+m + reduced acceptor + O2 = 4-dehydro-beta-D-glucosyl-[(1-&gt;4)-beta-D-glucosyl]n-1 + [(1-&gt;4)-beta-D-glucosyl]m + acceptor + H2O.. Is able to utilize various natural phenolic compounds as reducing agents. Most of these reducing agents are present in plants, either free or as lignin building blocks, such as sinapic acid, or as flavonoids such as catechin and dopamine. Phenolic compounds with 1,2-benzenediol and 1,2,3-benzenetriol moieties yield the highest release of oxidized and non-oxidized glucooligosaccharides from cellulose compared to monophenols or sulfur-containing compounds. Its function is as follows. Lytic polysaccharide monooxygenase (LPMO) that depolymerizes crystalline and amorphous polysaccharides via the oxidation of scissile alpha- or beta-(1-4)-glycosidic bonds, yielding C4 oxidation products. Catalysis by LPMOs requires the reduction of the active-site copper from Cu(II) to Cu(I) by a reducing agent and H(2)O(2) or O(2) as a cosubstrate. Shows oxidative cleavage of beta-(1-3, 1-4)-glucan from oat spelt or xyloglucan from tamarind seed, in addition to cellulose. The protein is AA9 family lytic polysaccharide monooxygenase C of Thermothelomyces thermophilus (strain ATCC 42464 / BCRC 31852 / DSM 1799) (Sporotrichum thermophile).